The chain runs to 152 residues: Deoxyuridine 5'-triphosphate nucleotidohydrolase (152 aa).

Substrate is bound by residues 71–73 (RSG), Asn84, 88–90 (LID), and Met98.

The protein belongs to the dUTPase family. Mg(2+) serves as cofactor.

The enzyme catalyses dUTP + H2O = dUMP + diphosphate + H(+). The protein operates within pyrimidine metabolism; dUMP biosynthesis; dUMP from dCTP (dUTP route): step 2/2. Functionally, this enzyme is involved in nucleotide metabolism: it produces dUMP, the immediate precursor of thymidine nucleotides and it decreases the intracellular concentration of dUTP so that uracil cannot be incorporated into DNA. The protein is Deoxyuridine 5'-triphosphate nucleotidohydrolase of Cronobacter sakazakii (strain ATCC BAA-894) (Enterobacter sakazakii).